Consider the following 61-residue polypeptide: Large ribosomal subunit protein bL32 (61 aa).

The span at 1–16 (MAVPKKKTSKSRKNMR) shows a compositional bias: basic residues. A disordered region spans residues 1–20 (MAVPKKKTSKSRKNMRRAHD).

This sequence belongs to the bacterial ribosomal protein bL32 family.

The sequence is that of Large ribosomal subunit protein bL32 from Pelobacter propionicus (strain DSM 2379 / NBRC 103807 / OttBd1).